The primary structure comprises 368 residues: Microtubule-associated protein Jupiter (368 aa).

Position 30 is a phosphoserine (S30). T41 bears the Phosphothreonine mark. Residues R81–L93 are compositionally biased toward basic and acidic residues. The interval R81 to N106 is disordered. The residue at position 102 (T102) is a Phosphothreonine. Phosphoserine is present on residues S111, S146, and S157. Low complexity-rich tracts occupy residues N129–S157 and G238–R248. Disordered regions lie at residues N129–N164, S196–N256, and K316–W368. Polar residues predominate over residues G337–N354.

This sequence belongs to the MAP Jupiter family.

It localises to the nucleus. The protein localises to the cytoplasm. The protein resides in the cytoskeleton. It is found in the spindle. Functionally, binds to all microtubule populations. The chain is Microtubule-associated protein Jupiter from Drosophila willistoni (Fruit fly).